A 340-amino-acid polypeptide reads, in one-letter code: Glyceraldehyde-3-phosphate dehydrogenase (340 aa).

NAD(+) contacts are provided by residues 11–12 and Gly109; that span reads TI. A D-glyceraldehyde 3-phosphate-binding site is contributed by 138 to 140; the sequence is SCN. Residue Cys139 is the Nucleophile of the active site. Residue Arg167 coordinates NAD(+). Residue 193–194 coordinates D-glyceraldehyde 3-phosphate; that stretch reads HA. Gln300 contacts NAD(+).

The protein belongs to the glyceraldehyde-3-phosphate dehydrogenase family. In terms of assembly, homotetramer.

Its subcellular location is the cytoplasm. It catalyses the reaction D-glyceraldehyde 3-phosphate + phosphate + NADP(+) = (2R)-3-phospho-glyceroyl phosphate + NADPH + H(+). It carries out the reaction D-glyceraldehyde 3-phosphate + phosphate + NAD(+) = (2R)-3-phospho-glyceroyl phosphate + NADH + H(+). Its pathway is carbohydrate degradation; glycolysis; pyruvate from D-glyceraldehyde 3-phosphate: step 1/5. The polypeptide is Glyceraldehyde-3-phosphate dehydrogenase (Saccharolobus islandicus (strain L.S.2.15 / Lassen #1) (Sulfolobus islandicus)).